The sequence spans 265 residues: Small ribosomal subunit protein uS3 (265 aa).

The KH type-2 domain occupies 39–107; it reads VREFLKKKLK…PVHVNIEEIR (69 aa). Residues 211 to 265 are disordered; the sequence is NDAPVVEEPQEDRRRRPGRPEGRRREGEGRPAGNRRGGAGAGRRAAPGADAKSGE. Residues 221–239 show a composition bias toward basic and acidic residues; it reads EDRRRRPGRPEGRRREGEG.

Belongs to the universal ribosomal protein uS3 family. Part of the 30S ribosomal subunit. Forms a tight complex with proteins S10 and S14.

Its function is as follows. Binds the lower part of the 30S subunit head. Binds mRNA in the 70S ribosome, positioning it for translation. The polypeptide is Small ribosomal subunit protein uS3 (Cupriavidus metallidurans (strain ATCC 43123 / DSM 2839 / NBRC 102507 / CH34) (Ralstonia metallidurans)).